The primary structure comprises 240 residues: Mediator of RNA polymerase II transcription subunit 19-B (240 aa).

Residues 1–14 (MTEIFSSLYGQPDS) are compositionally biased toward polar residues. 2 disordered regions span residues 1–29 (MTEI…GSGK) and 168–240 (PKKK…SSLR). Basic residues-rich tracts occupy residues 168–180 (PKKK…KHHR) and 209–221 (KKKK…KKNR).

The protein belongs to the Mediator complex subunit 19 family. As to quaternary structure, component of the Mediator complex.

It localises to the nucleus. Its function is as follows. Component of the Mediator complex, a coactivator involved in the regulated transcription of nearly all RNA polymerase II-dependent genes. Mediator functions as a bridge to convey information from gene-specific regulatory proteins to the basal RNA polymerase II transcription machinery. Mediator is recruited to promoters by direct interactions with regulatory proteins and serves as a scaffold for the assembly of a functional preinitiation complex with RNA polymerase II and the general transcription factors. The chain is Mediator of RNA polymerase II transcription subunit 19-B (med19b) from Danio rerio (Zebrafish).